The following is a 979-amino-acid chain: MRGARGAWDLLCVLLVLLRGQTATSQPSASPGEPSPPSIHPAQSELIVEAGDTLSLTCIDPDFVRWTFKTYFNEMVENKKNEWIQEKAEATRTGTYTCSNSNGLTSSIYVFVRDPAKLFLVGLPLFGKEDSDALVRCPLTDPQVSNYSLIECDGKSLPTDLTFVPNPKAGITIKNVKRAYHRLCVRCAAQRDGTWLHSDKFTLKVRAAIKAIPVVSVPETSHLLKKGDTFTVVCTIKDVSTSVNSMWLKMNPQPQHIAQVKHNSWHRGDFNYERQETLTISSARVDDSGVFMCYANNTFGSANVTTTLKVVEKGFINISPVKNTTVFVTDGENVDLVVEYEAYPKPEHQQWIYMNRTSANKGKDYVKSDNKSNIRYVNQLRLTRLKGTEGGTYTFLVSNSDASASVTFNVYVNTKPEILTYDRLINGMLQCVAEGFPEPTIDWYFCTGAEQRCTTPVSPVDVQVQNVSVSPFGKLVVQSSIDSSVFRHNGTVECKASNDVGKSSAFFNFAFKGNNKEQIQAHTLFTPLLIGFVVAAGAMGIIVMVLTYKYLQKPMYEVQWKVVEEINGNNYVYIDPTQLPYDHKWEFPRNRLSFGKTLGAGAFGKVVEATAYGLIKSDAAMTVAVKMLKPSAHLTEREALMSELKVLSYLGNHMNIVNLLGACTVGGPTLVITEYCCYGDLLNFLRRKRDSFIFSKQEEQAEAALYKNLLHSTEPSCDSSNEYMDMKPGVSYVVPTKTDKRRSARIDSYIERDVTPAIMEDDELALDLDDLLSFSYQVAKGMAFLASKNCIHRDLAARNILLTHGRITKICDFGLARDIRNDSNYVVKGNARLPVKWMAPESIFSCVYTFESDVWSYGIFLWELFSLGSSPYPGMPVDSKFYKMIKEGFRMVSPEHAPAEMYDVMKTCWDADPLKRPTFKQVVQLIEKQISDSTKHIYSNLANCNPNPENPVVVDHSVRVNSVGSSASSTQPLLVHEDA.

Residues 1–24 (MRGARGAWDLLCVLLVLLRGQTAT) form the signal peptide. Topologically, residues 25 to 527 (SQPSASPGEP…QIQAHTLFTP (503 aa)) are extracellular. Ig-like C2-type domains follow at residues 31–117 (PGEP…DPAK), 126–210 (FGKE…AAIK), and 217–315 (VPET…EKGF). Intrachain disulfides connect Cys-58/Cys-98, Cys-137/Cys-187, Cys-152/Cys-184, and Cys-234/Cys-293. N-linked (GlcNAc...) asparagine glycosylation is present at Asn-146. N-linked (GlcNAc...) asparagine glycosylation is found at Asn-296, Asn-303, Asn-323, Asn-355, Asn-370, Asn-466, and Asn-489. Ig-like C2-type domains are found at residues 324-417 (TTVF…TKPE) and 420-514 (TYDR…FKGN). The cysteines at positions 431 and 494 are disulfide-linked. Residues 528 to 548 (LLIGFVVAAGAMGIIVMVLTY) form a helical membrane-spanning segment. Over 549–979 (KYLQKPMYEV…TQPLLVHEDA (431 aa)) the chain is Cytoplasmic. Phosphotyrosine; by autocatalysis is present on residues Tyr-550 and Tyr-556. Position 571 (Tyr-571) interacts with Mg(2+). Residues Tyr-571 and Tyr-573 each carry the phosphotyrosine modification. Positions 571-573 (YVY) are important for interaction with phosphotyrosine-binding proteins. The Protein kinase domain occupies 592–939 (LSFGKTLGAG…ISDSTKHIYS (348 aa)). ATP-binding positions include 599–606 (GAGAFGKV), Lys-626, and 674–680 (EYCCYGD). Tyr-706 bears the Phosphotyrosine mark. Ser-720 is subject to Phosphoserine. Phosphotyrosine; by autocatalysis is present on residues Tyr-723 and Tyr-732. Residues Ser-743 and Ser-748 each carry the phosphoserine; by PKC/PRKCA modification. Catalysis depends on Asp-794, which acts as the Proton acceptor. Residue Arg-798 participates in ATP binding. Asn-799 and Asp-812 together coordinate Mg(2+). Ser-823 bears the Phosphoserine mark. Position 825 is a phosphotyrosine; by autocatalysis (Tyr-825). The residue at position 893 (Ser-893) is a Phosphoserine. Tyr-902 is subject to Phosphotyrosine; by autocatalysis. At Tyr-938 the chain carries Phosphotyrosine. Residue Ser-962 is modified to Phosphoserine.

It belongs to the protein kinase superfamily. Tyr protein kinase family. CSF-1/PDGF receptor subfamily. In terms of assembly, monomer in the absence of bound KITLG/SCF. Homodimer in the presence of bound KITLG/SCF, forming a heterotetramer with two KITLG/SCF molecules. Interacts (via phosphorylated tyrosine residues) with the adapter proteins GRB2 and GRB7 (via SH2 domain), and SH2B2/APS. Interacts (via C-terminus) with MPDZ (via the tenth PDZ domain). Interacts (via phosphorylated tyrosine residues) with the protein phosphatases PTPN6/SHP-1 (via SH2 domain), PTPN11/SHP-2 (via SH2 domain) and PTPRU. Interacts with DOK1 and TEC. Interacts with the protein kinase FES/FPS. Interacts with PLCG1. Interacts (via phosphorylated tyrosine residues) with PIK3R1 and PIK3 catalytic subunit. Interacts (KITLG/SCF-bound) with IL1RL1. Interacts with IL1RAP (independent of stimulation with KITLG/SCF). A mast cell-specific KITLG/SCF-induced interleukin-33 signaling complex contains IL1RL1, IL1RAP, KIT and MYD88. Ubiquitinated by SOCS6. KIT is rapidly ubiquitinated after autophosphorylation induced by KITLG/SCF binding, leading to internalization and degradation. In terms of processing, autophosphorylated on tyrosine residues. KITLG/SCF binding promotes autophosphorylation of isoform 1 and isoform 2. Isoform 1 shows low levels of tyrosine phosphorylation in the absence of added KITLG/SCF, while isoform 2 requires stimulation by KITLG/SCF for phosphorylation (in vitro). Phosphorylation of Tyr-573 is required for interaction with PTPN6/SHP-1. Phosphorylation of Tyr-571 is required for interaction with PTPN11/SHP-2. Phosphorylated tyrosine residues are important for interaction with specific binding partners. Isoform 1 and isoform 2 are detected in bone marrow cells, spermatogonia and spermatocytes, but not in round spermatids, elongating spermatids and spermatozoa. Isoform 3 is detected in round spermatids, elongating spermatids and spermatozoa, but not in spermatogonia and spermatocytes (at protein level). Isoform 1 is widely expressed and detected in fetal liver and bone marrow. Isoform 3 is detected in bone marrow cells enriched in hematopoietic stem cells.

The protein resides in the cell membrane. Its subcellular location is the cytoplasm. It catalyses the reaction L-tyrosyl-[protein] + ATP = O-phospho-L-tyrosyl-[protein] + ADP + H(+). Its activity is regulated as follows. Present in an inactive conformation in the absence of bound ligand. KITLG/SCF binding leads to dimerization and activation by autophosphorylation. Tyrosine-protein kinase that acts as a cell-surface receptor for the cytokine KITLG/SCF and plays an essential role in the regulation of cell survival and proliferation, hematopoiesis, stem cell maintenance, gametogenesis, mast cell development, migration and function, and in melanogenesis. In response to KITLG/SCF binding, KIT can activate several signaling pathways. Phosphorylates PIK3R1, PLCG1, SH2B2/APS and CBL. Activates the AKT1 signaling pathway by phosphorylation of PIK3R1, the regulatory subunit of phosphatidylinositol 3-kinase. Activated KIT also transmits signals via GRB2 and activation of RAS, RAF1 and the MAP kinases MAPK1/ERK2 and/or MAPK3/ERK1. Promotes activation of STAT family members STAT1, STAT3, STAT5A and STAT5B. Activation of PLCG1 leads to the production of the cellular signaling molecules diacylglycerol and inositol 1,4,5-trisphosphate. KIT signaling is modulated by protein phosphatases, and by rapid internalization and degradation of the receptor. Activated KIT promotes phosphorylation of the protein phosphatases PTPN6/SHP-1 and PTPRU, and of the transcription factors STAT1, STAT3, STAT5A and STAT5B. Promotes phosphorylation of PIK3R1, CBL, CRK (isoform Crk-II), LYN, MAPK1/ERK2 and/or MAPK3/ERK1, PLCG1, SRC and SHC1. The protein is Mast/stem cell growth factor receptor Kit (Kit) of Mus musculus (Mouse).